The chain runs to 201 residues: Anthranilate synthase component II (201 aa).

Positions 3–196 (DILLLDNIDS…LAWAQRKLEP (194 aa)) constitute a Glutamine amidotransferase type-1 domain. Residue 57 to 59 (GPG) participates in L-glutamine binding. Catalysis depends on Cys-84, which acts as the Nucleophile; for GATase activity. Residues Gln-88 and 134-135 (SL) contribute to the L-glutamine site. Residues His-170 and Glu-172 each act as for GATase activity in the active site.

As to quaternary structure, tetramer of two components I and two components II.

The enzyme catalyses chorismate + L-glutamine = anthranilate + pyruvate + L-glutamate + H(+). It catalyses the reaction N-(5-phospho-beta-D-ribosyl)anthranilate + diphosphate = 5-phospho-alpha-D-ribose 1-diphosphate + anthranilate. It participates in amino-acid biosynthesis; L-tryptophan biosynthesis; L-tryptophan from chorismate: step 1/5. The protein operates within amino-acid biosynthesis; L-tryptophan biosynthesis; L-tryptophan from chorismate: step 2/5. The protein is Anthranilate synthase component II (trpG-TRPD) of Shigella dysenteriae.